A 501-amino-acid chain; its full sequence is Raftlin-2 (501 aa).

2 disordered regions span residues methionine 1–phenylalanine 20 and serine 196–glycine 238. The N-myristoyl glycine moiety is linked to residue glycine 2. A lipid anchor (S-palmitoyl cysteine) is attached at cysteine 3. Polar residues predominate over residues methionine 224–serine 233. Serine 405 is subject to Phosphoserine. The segment at alanine 407–proline 454 is disordered. Position 409 is a phosphothreonine (threonine 409). The segment covering threonine 410 to lysine 425 has biased composition (basic and acidic residues). Polar residues predominate over residues threonine 427–proline 440. A Phosphoserine modification is found at serine 430. Basic and acidic residues predominate over residues glutamate 442–arginine 451.

The protein belongs to the raftlin family.

The protein localises to the cell membrane. Upon bacterial lipopolysaccharide stimulation, mediates clathrin-dependent internalization of TLR4 in dendritic cells, resulting in activation of TICAM1-mediated signaling and subsequent IFNB1 production. May regulate B-cell antigen receptor mediated-signaling. The chain is Raftlin-2 (RFTN2) from Pongo abelii (Sumatran orangutan).